A 413-amino-acid chain; its full sequence is MAMLRSGYRRFGCLRAALKSLAQTHHRSITFCIDPSLGLNEEQKGFQKVAFDFAAREMAPNMAEWDQKELFPVDVMRKAAQLGFGGVYVRTDVGGSGLSRLDTSVIFEALATGCTSTTAYISIHNMCAWMIDSFGNEEQRHKFCPPLCTMEKFASYCLTEPGSGSDAASLLTSAKQQGDHYILNGSKAFISGGGESDIYVVMCRTGGSGAKGISCIVVEKGTPGLSFGKKEKKVGWNSQPTRAVIFEDCAVPVANRIGTEGQGFLIAMKGLNGGRINVASCSLGAAHASVILTQEHLKVRKQFGAPLARSQYLQFQLADMATKLVASRLMIRTAAVALQEEREDAVALCSMAKLFATEECFAICNQALQMHGGYGYLKDYAVQQYMRDSRVHQILEGSNEVMRMLISRNLLQD.

The transit peptide at 1–20 (MAMLRSGYRRFGCLRAALKS) directs the protein to the mitochondrion. An N6-acetyllysine; alternate modification is found at lysine 48. Lysine 48 is subject to N6-succinyllysine; alternate. FAD is bound by residues 156–165 (YCLTEPGSGS) and 189–191 (FIS). Serine 165 is a substrate binding site. Position 211 is an N6-succinyllysine (lysine 211). An N6-acetyllysine modification is found at lysine 229. The residue at position 269 (lysine 269) is an N6-succinyllysine. 272-275 (NGGR) contacts substrate. FAD contacts are provided by residues arginine 300, 310–311 (SQ), and 369–373 (QMHGG). Glutamate 396 serves as the catalytic Proton acceptor. 398–400 (SNE) contacts FAD. Arginine 408 lines the substrate pocket.

This sequence belongs to the acyl-CoA dehydrogenase family. As to quaternary structure, homotetramer, formed by a dimer of dimers. It depends on FAD as a cofactor.

The protein localises to the mitochondrion. The catalysed reaction is 2-methylpropanoyl-CoA + oxidized [electron-transfer flavoprotein] + H(+) = 2-methylpropenoyl-CoA + reduced [electron-transfer flavoprotein]. The enzyme catalyses (2S)-2-methylbutanoyl-CoA + oxidized [electron-transfer flavoprotein] + H(+) = (2E)-2-methylbut-2-enoyl-CoA + reduced [electron-transfer flavoprotein]. It carries out the reaction propanoyl-CoA + oxidized [electron-transfer flavoprotein] + H(+) = acryloyl-CoA + reduced [electron-transfer flavoprotein]. The protein operates within amino-acid degradation; L-valine degradation. In terms of biological role, isobutyryl-CoA dehydrogenase which catalyzes the conversion of 2-methylpropanoyl-CoA to (2E)-2-methylpropenoyl-CoA in the valine catabolic pathway. To a lesser extent, also able to catalyze the oxidation of (2S)-2-methylbutanoyl-CoA. The polypeptide is Isobutyryl-CoA dehydrogenase, mitochondrial (Mus musculus (Mouse)).